The sequence spans 286 residues: Homoserine kinase (286 aa).

78–88 (PVAHGLGSSSS) contributes to the ATP binding site.

The protein belongs to the GHMP kinase family. Homoserine kinase subfamily.

It localises to the cytoplasm. The catalysed reaction is L-homoserine + ATP = O-phospho-L-homoserine + ADP + H(+). Its pathway is amino-acid biosynthesis; L-threonine biosynthesis; L-threonine from L-aspartate: step 4/5. Functionally, catalyzes the ATP-dependent phosphorylation of L-homoserine to L-homoserine phosphate. The sequence is that of Homoserine kinase from Limosilactobacillus fermentum (strain NBRC 3956 / LMG 18251) (Lactobacillus fermentum).